Consider the following 234-residue polypeptide: MSETSFNLISEKCDILSILRDHPENRIYRRKIEELSKRFTAIRKTKGDGNCFYRALGYSYLESLLGKSREIFKFKERVLQTPNDLLAAGFEEHKFRNFFNAFYSVVELVEKDGSVSSLLKVFNDQSASDHIVQFLRLLTSAFIRNRADFFRHFIDEEMDIKDFCTHEVEPMATECDHIQITALSQALSIALQVEYVDEMDTALNHHVFPEAATPSVYLLYKTSHYNILYAADKH.

An OTU domain is found at 40–231; the sequence is TAIRKTKGDG…TSHYNILYAA (192 aa). Residue D48 is part of the active site. C51 (nucleophile) is an active-site residue. The active site involves H224.

Belongs to the peptidase C65 family. In terms of tissue distribution, widely expressed. Expressed at higher level in brain.

The catalysed reaction is Thiol-dependent hydrolysis of ester, thioester, amide, peptide and isopeptide bonds formed by the C-terminal Gly of ubiquitin (a 76-residue protein attached to proteins as an intracellular targeting signal).. Its function is as follows. Hydrolase that can remove conjugated ubiquitin from proteins in vitro and may therefore play an important regulatory role at the level of protein turnover by preventing degradation. Mediates deubiquitination of 'Lys-11'-,'Lys-48'- and 'Lys-63'-linked polyubiquitin chains, with a preference for 'Lys-63'-linked polyubiquitin chains. The polypeptide is Ubiquitin thioesterase OTUB2 (OTUB2) (Homo sapiens (Human)).